The following is a 392-amino-acid chain: GPI alpha-1,4-mannosyltransferase I, catalytic subunit (392 aa).

Topologically, residues 1 to 4 (MEAR) are cytoplasmic. A helical membrane pass occupies residues 5–25 (VCVLFGAAALLRLLLLCVGVY). The Lumenal portion of the chain corresponds to 26–65 (QDQTLKLKYTDVDYHVFTDAARFITQGESPYRRSTFRYTP). Residues 66-86 (LLALLLVPNVYLSLLFGKLLF) traverse the membrane as a helical segment. The Cytoplasmic portion of the chain corresponds to 87 to 125 (GFCDLLSGLLMFRLLVLRGASHGSACVSCGLWLLNPLPM). Residues 126 to 148 (AVSTRGNAESVLAVLVLSTLLCL) form a helical membrane-spanning segment. The Lumenal segment spans residues 149-156 (QLRKHTTA). A helical transmembrane segment spans residues 157 to 177 (ALLFGLSVHMKIYPVTYALPI). Residues 178–198 (ALALTAAPARGRGVLLRFFSP) are Cytoplasmic-facing. Residues 199–219 (ALLRFAAVSAAVFLSLGLIFY) form a helical membrane-spanning segment. Topologically, residues 220–261 (CRYGWEFLQEAYLYHLTRRDLRHNFSPFFYLQYVCAERCWSS) are lumenal. Residues 262–282 (GLLPLLLLPQLLLLLLASAAF) traverse the membrane as a helical segment. The Cytoplasmic segment spans residues 283–302 (SSDLPFCCFLHTAVFVSFNR). A helical membrane pass occupies residues 303 to 323 (VCTSQYFLWYLCLLPVVLPRL). Over 324–330 (RLRLGRG) the chain is Lumenal. Residues 331–351 (LLLLLLWLLLQGLWLAPAYLL) traverse the membrane as a helical segment. The Cytoplasmic portion of the chain corresponds to 352-360 (EFQGWNSFS). The helical transmembrane segment at 361 to 381 (WIWAASLLFLLTNTFILAQII) threads the bilayer. Residues 382-392 (QHYRPHDRKAD) are Lumenal-facing.

This sequence belongs to the PIGM family. As to quaternary structure, part of the glycosylphosphatidylinositol-mannosyltransferase I complex that is composed of PIGM and PIGX.

The protein localises to the endoplasmic reticulum membrane. It participates in glycolipid biosynthesis; glycosylphosphatidylinositol-anchor biosynthesis. Catalytic subunit of the glycosylphosphatidylinositol-mannosyltransferase I complex which catalyzes the transfer of the first mannose, via an alpha-1,4 bond from a dolichol-phosphate-mannose (Dol-P-Man) to the glucosaminyl acyl phosphatidylinositol (GlcN-(acyl)PI) intermediate to generate alpha-D-Man-(1-&gt;4)-alpha-D-GlcN-(1-&gt;6)-(1-radyl,2-acyl-sn-glycero-3-phospho)-2-acyl-inositol and participates in the sixth step of the glycosylphosphatidylinositol-anchor biosynthesis. The polypeptide is GPI alpha-1,4-mannosyltransferase I, catalytic subunit (Danio rerio (Zebrafish)).